The sequence spans 393 residues: Phosphoglycerate kinase (393 aa).

Residues 21 to 23 (DFN), arginine 36, 59 to 62 (HLGR), arginine 118, and arginine 151 contribute to the substrate site. Residues lysine 201, glutamate 323, and 349 to 352 (GGDS) contribute to the ATP site.

Belongs to the phosphoglycerate kinase family. As to quaternary structure, monomer.

It localises to the cytoplasm. It catalyses the reaction (2R)-3-phosphoglycerate + ATP = (2R)-3-phospho-glyceroyl phosphate + ADP. Its pathway is carbohydrate degradation; glycolysis; pyruvate from D-glyceraldehyde 3-phosphate: step 2/5. The polypeptide is Phosphoglycerate kinase (Moorella thermoacetica (strain ATCC 39073 / JCM 9320)).